Reading from the N-terminus, the 259-residue chain is Global transcriptional regulator CodY (259 aa).

The GAF domain stretch occupies residues 1–155 (MELLAKTRKL…SSTVVGMEIL (155 aa)). A DNA-binding region (H-T-H motif) is located at residues 203-222 (ASKIADRVGITRSVIVNALR). Residue Ser215 is modified to Phosphoserine.

This sequence belongs to the CodY family.

The protein resides in the cytoplasm. DNA-binding global transcriptional regulator which is involved in the adaptive response to starvation and acts by directly or indirectly controlling the expression of numerous genes in response to nutrient availability. During rapid exponential growth, CodY is highly active and represses genes whose products allow adaptation to nutrient depletion. This Bacillus cereus (strain B4264) protein is Global transcriptional regulator CodY.